The chain runs to 199 residues: Type-4 uracil-DNA glycosylase (199 aa).

Residues Cys-14 and Cys-17 each coordinate [4Fe-4S] cluster. Uracil contacts are provided by residues 41–43, Phe-55, and Asn-81; that span reads GEA. The segment at 77–114 is pseudo-FCL; sequence VYITNVLKCRPPNNRDPTPEEVEKCGDYLVRQLEAIRP. Positions 85 and 101 each coordinate [4Fe-4S] cluster. Uracil is bound at residue His-163.

The protein belongs to the uracil-DNA glycosylase (UDG) superfamily. Type 4 (UDGa) family.

The enzyme catalyses Hydrolyzes single-stranded DNA or mismatched double-stranded DNA and polynucleotides, releasing free uracil.. Product-inhibited by both uracil and apurinic/apyrimidinic sites. Functionally, removes uracil bases that are present in DNA as a result of either deamination of cytosine or misincorporation of dUMP instead of dTMP. Can remove uracil from double-stranded DNA containing either a U/G or U/A base pair as well as from single-stranded DNA. The protein is Type-4 uracil-DNA glycosylase of Archaeoglobus fulgidus (strain ATCC 49558 / DSM 4304 / JCM 9628 / NBRC 100126 / VC-16).